The sequence spans 1906 residues: DENN domain-containing protein 4C (1906 aa).

An MABP domain is found at 40-199; the sequence is KAPITDIAVI…NVFLCYKKSV (160 aa). Residues 191-363 form the uDENN domain; it reads VFLCYKKSVP…NIPFPSPQRP (173 aa). Residues 384–520 enclose the cDENN domain; the sequence is PLPLSGANFS…PCKSLLGTLR (137 aa). The region spanning 522–640 is the dDENN domain; it reads LYQQLCSVHR…CSFVSDKDTG (119 aa). 3 positions are modified to phosphoserine: Ser-702, Ser-736, and Ser-740. Residues 818–852 form a PPR repeat; that stretch reads DEVCYRVVMQLCGLWVNPVLAVRVLFEMKTARIKP. Residues 904 to 917 show a composition bias toward polar residues; that stretch reads SQVFSISGGQSDQG. Disordered stretches follow at residues 904-942 and 963-984; these read SQVF…PPEL and LQPT…SIVK. Residues 920–939 show a composition bias toward basic and acidic residues; it reads SKDELVKEGADGHAPEEHTP. Thr-966 carries the post-translational modification Phosphothreonine. The segment covering 966–975 has biased composition (pro residues); it reads TPEPQSPTEP. Ser-971 bears the Phosphoserine mark. Thr-973 bears the Phosphothreonine mark. A phosphoserine mark is found at Ser-987, Ser-1000, Ser-1043, Ser-1058, Ser-1096, and Ser-1123. Residues 1154-1171 are compositionally biased toward polar residues; the sequence is NSLQSNSHSDQSRDTQAG. Positions 1154 to 1184 are disordered; sequence NSLQSNSHSDQSRDTQAGAQDPVNKRSSSYA. Ser-1181, Ser-1221, Ser-1240, Ser-1248, and Ser-1274 each carry phosphoserine. Residues 1246–1317 form a disordered region; the sequence is SCSMELHGEG…PQSPYRAYKD (72 aa). Residues 1281-1291 are compositionally biased toward basic and acidic residues; that stretch reads PPARDSTETEK. The span at 1292–1302 shows a compositional bias: polar residues; the sequence is SSPAVSSSKTL. A phosphoserine mark is found at Ser-1321, Ser-1333, and Ser-1342. Disordered regions lie at residues 1410-1440, 1548-1577, and 1596-1628; these read SPNT…GDVG, STSG…SAEP, and ASYT…LSKR. Positions 1423-1437 are enriched in low complexity; it reads LTQSNTSLGSSSSSG. Polar residues-rich tracts occupy residues 1548–1564 and 1611–1628; these read STSG…SASE and GDVQ…LSKR. Ser-1620, Ser-1624, Ser-1626, Ser-1637, and Ser-1796 each carry phosphoserine.

Phosphorylated in response to insulin.

It is found in the cytoplasmic vesicle membrane. The protein localises to the cell membrane. Its subcellular location is the cytoplasm. It localises to the cytosol. Its function is as follows. Guanine nucleotide exchange factor (GEF) activating RAB10. Promotes the exchange of GDP to GTP, converting inactive GDP-bound RAB10 into its active GTP-bound form. Thereby, stimulates SLC2A4/GLUT4 glucose transporter-enriched vesicles delivery to the plasma membrane in response to insulin. In Mus musculus (Mouse), this protein is DENN domain-containing protein 4C (Dennd4c).